The chain runs to 270 residues: Glutamate 5-kinase (270 aa).

Residue Lys-15 coordinates ATP. Residues Ser-55, Asp-142, and Asn-158 each coordinate substrate. Residues 178-179 (SD) and 220-226 (TGGMLSK) contribute to the ATP site.

This sequence belongs to the glutamate 5-kinase family.

It localises to the cytoplasm. The catalysed reaction is L-glutamate + ATP = L-glutamyl 5-phosphate + ADP. Its pathway is amino-acid biosynthesis; L-proline biosynthesis; L-glutamate 5-semialdehyde from L-glutamate: step 1/2. In terms of biological role, catalyzes the transfer of a phosphate group to glutamate to form L-glutamate 5-phosphate. In Streptococcus uberis (strain ATCC BAA-854 / 0140J), this protein is Glutamate 5-kinase.